A 100-amino-acid polypeptide reads, in one-letter code: Transcription and mRNA export factor SUS1 (100 aa).

This sequence belongs to the ENY2 family. In terms of assembly, component of the nuclear pore complex (NPC)-associated TREX-2 complex (transcription and export complex 2), composed of at least SUS1, SAC3, THP1, SEM1, and CDC31. TREX-2 contains 2 SUS1 chains. The TREX-2 complex interacts with the nucleoporin NUP1. Component of the 1.8 MDa SAGA transcription coactivator-HAT complex. SAGA is built of 5 distinct domains with specialized functions. Within the SAGA complex, SUS1, SGF11, SGF73 and UBP8 form an additional subcomplex of SAGA called the DUB module (deubiquitination module). Interacts directly with THP1, SAC3, SGF11, and with the RNA polymerase II.

It localises to the nucleus. The protein resides in the nucleoplasm. Its subcellular location is the cytoplasm. It is found in the P-body. Involved in mRNA export coupled transcription activation by association with both the TREX-2 and the SAGA complexes. At the promoters, SAGA is required for recruitment of the basal transcription machinery. It influences RNA polymerase II transcriptional activity through different activities such as TBP interaction and promoter selectivity, interaction with transcription activators, and chromatin modification through histone acetylation and deubiquitination. Within the SAGA complex, participates in a subcomplex required for deubiquitination of H2B and for the maintenance of steady-state H3 methylation levels. The TREX-2 complex functions in docking export-competent ribonucleoprotein particles (mRNPs) to the nuclear entrance of the nuclear pore complex (nuclear basket). TREX-2 participates in mRNA export and accurate chromatin positioning in the nucleus by tethering genes to the nuclear periphery. May also be involved in cytoplasmic mRNA decay by interaction with components of P-bodies. In Candida glabrata (strain ATCC 2001 / BCRC 20586 / JCM 3761 / NBRC 0622 / NRRL Y-65 / CBS 138) (Yeast), this protein is Transcription and mRNA export factor SUS1.